A 152-amino-acid polypeptide reads, in one-letter code: MAIWVDADACPNVIKEILFRAAERTQIPVTLVANQPLRVPPSRFIRTLRVEQGFDVADNEIVRQCAAGDLVITADIPLAAEVLAKGGAALNPRGERYSEATIRERLTMRDFMETLRASGVQTGGPDSLSQRDRQQFAAELEKWLLAVKRQQG.

The protein belongs to the UPF0178 family.

In Klebsiella pneumoniae (strain 342), this protein is UPF0178 protein KPK_4355.